The following is a 200-amino-acid chain: Lipopolysaccharide core heptose(II)-phosphate phosphatase (200 aa).

The signal sequence occupies residues 1–25; sequence MLAFCRSSLKSKKYFIILLALAAIA.

Belongs to the phosphoglycerate mutase family. Ais subfamily.

It localises to the periplasm. Its pathway is bacterial outer membrane biogenesis; lipopolysaccharide metabolism. Its function is as follows. Catalyzes the dephosphorylation of heptose(II) of the outer membrane lipopolysaccharide core. This Escherichia coli O17:K52:H18 (strain UMN026 / ExPEC) protein is Lipopolysaccharide core heptose(II)-phosphate phosphatase.